Consider the following 657-residue polypeptide: DNA ligase (657 aa).

Residue 80–81 (SL) coordinates NAD(+). Residue lysine 104 is the N6-AMP-lysine intermediate of the active site. NAD(+) contacts are provided by arginine 125, glutamate 159, and lysine 297. Positions 386, 389, 406, and 411 each coordinate Zn(2+). Residues 571–657 (QSEQIFENLN…EWLNNGVRPE (87 aa)) enclose the BRCT domain.

The protein belongs to the NAD-dependent DNA ligase family. LigA subfamily. It depends on Mg(2+) as a cofactor. Requires Mn(2+) as cofactor.

The catalysed reaction is NAD(+) + (deoxyribonucleotide)n-3'-hydroxyl + 5'-phospho-(deoxyribonucleotide)m = (deoxyribonucleotide)n+m + AMP + beta-nicotinamide D-nucleotide.. In terms of biological role, DNA ligase that catalyzes the formation of phosphodiester linkages between 5'-phosphoryl and 3'-hydroxyl groups in double-stranded DNA using NAD as a coenzyme and as the energy source for the reaction. It is essential for DNA replication and repair of damaged DNA. The protein is DNA ligase of Ruminiclostridium cellulolyticum (strain ATCC 35319 / DSM 5812 / JCM 6584 / H10) (Clostridium cellulolyticum).